Reading from the N-terminus, the 159-residue chain is Phosphopantetheine adenylyltransferase (159 aa).

Residue Ser9 coordinates substrate. Residues 9-10 (SF) and His17 each bind ATP. Residues Lys41, Ile75, and Lys89 each coordinate substrate. ATP contacts are provided by residues 90-92 (GLR), Glu100, and 124-130 (LEHISSS).

This sequence belongs to the bacterial CoaD family. As to quaternary structure, homohexamer. Mg(2+) is required as a cofactor.

Its subcellular location is the cytoplasm. It catalyses the reaction (R)-4'-phosphopantetheine + ATP + H(+) = 3'-dephospho-CoA + diphosphate. It functions in the pathway cofactor biosynthesis; coenzyme A biosynthesis; CoA from (R)-pantothenate: step 4/5. Reversibly transfers an adenylyl group from ATP to 4'-phosphopantetheine, yielding dephospho-CoA (dPCoA) and pyrophosphate. This Bifidobacterium animalis subsp. lactis (strain AD011) protein is Phosphopantetheine adenylyltransferase.